The primary structure comprises 348 residues: Uroporphyrinogen decarboxylase (348 aa).

Residues 23–27 (RQAGR), Asp72, Tyr148, Ser203, and His316 each bind substrate.

This sequence belongs to the uroporphyrinogen decarboxylase family. In terms of assembly, homodimer.

The protein resides in the cytoplasm. It catalyses the reaction uroporphyrinogen III + 4 H(+) = coproporphyrinogen III + 4 CO2. It functions in the pathway porphyrin-containing compound metabolism; protoporphyrin-IX biosynthesis; coproporphyrinogen-III from 5-aminolevulinate: step 4/4. Its function is as follows. Catalyzes the decarboxylation of four acetate groups of uroporphyrinogen-III to yield coproporphyrinogen-III. The chain is Uroporphyrinogen decarboxylase from Myxococcus xanthus (strain DK1622).